The primary structure comprises 97 residues: Ribosomal biogenesis factor (97 aa).

Ser-19 carries the phosphoserine modification. The residue at position 21 (Lys-21) is an N6-acetyllysine. The residue at position 69 (Ser-69) is a Phosphoserine.

In terms of assembly, associates with the pre-60S ribosomal particles.

Its subcellular location is the nucleus. The protein resides in the nucleolus. Trans-acting factor in ribosome biogenesis required for efficient 40S and 60S subunit production. The chain is Ribosomal biogenesis factor (Rbis) from Mus musculus (Mouse).